A 443-amino-acid chain; its full sequence is Aspartate--tRNA(Asp/Asn) ligase (443 aa).

An L-aspartate-binding site is contributed by glutamate 175. Residues glutamine 197 to lysine 200 form an aspartate region. Arginine 219 serves as a coordination point for L-aspartate. Residues arginine 219 to glutamate 221, arginine 227 to leucine 229, and glutamate 366 contribute to the ATP site. Glutamate 366 and serine 369 together coordinate Mg(2+). The L-aspartate site is built by serine 369 and arginine 373. An ATP-binding site is contributed by glycine 414 to arginine 417.

This sequence belongs to the class-II aminoacyl-tRNA synthetase family. Type 2 subfamily. In terms of assembly, homodimer. Mg(2+) is required as a cofactor.

The protein localises to the cytoplasm. The catalysed reaction is tRNA(Asx) + L-aspartate + ATP = L-aspartyl-tRNA(Asx) + AMP + diphosphate. In terms of biological role, aspartyl-tRNA synthetase with relaxed tRNA specificity since it is able to aspartylate not only its cognate tRNA(Asp) but also tRNA(Asn). Reaction proceeds in two steps: L-aspartate is first activated by ATP to form Asp-AMP and then transferred to the acceptor end of tRNA(Asp/Asn). The chain is Aspartate--tRNA(Asp/Asn) ligase from Methanococcoides burtonii (strain DSM 6242 / NBRC 107633 / OCM 468 / ACE-M).